A 121-amino-acid polypeptide reads, in one-letter code: Histone H2B, sperm (121 aa).

Residues methionine 1–lysine 30 are disordered. Residue proline 2 is modified to N,N-dimethylproline. Serine 108 carries an O-linked (GlcNAc) serine glycan. A Glycyl lysine isopeptide (Lys-Gly) (interchain with G-Cter in ubiquitin) cross-link involves residue lysine 116.

It belongs to the histone H2B family. As to quaternary structure, the nucleosome is a histone octamer containing two molecules each of H2A, H2B, H3 and H4 assembled in one H3-H4 heterotetramer and two H2A-H2B heterodimers. The octamer wraps approximately 147 bp of DNA. Monoubiquitination of Lys-116 gives a specific tag for epigenetic transcriptional activation and is also prerequisite for histone H3 'Lys-4' and 'Lys-79' methylation. Post-translationally, glcNAcylation at Ser-108 promotes monoubiquitination of Lys-116. It fluctuates in response to extracellular glucose, and associates with transcribed genes.

It is found in the nucleus. The protein resides in the chromosome. Its function is as follows. Core component of nucleosome. Nucleosomes wrap and compact DNA into chromatin, limiting DNA accessibility to the cellular machineries which require DNA as a template. Histones thereby play a central role in transcription regulation, DNA repair, DNA replication and chromosomal stability. DNA accessibility is regulated via a complex set of post-translational modifications of histones, also called histone code, and nucleosome remodeling. The sequence is that of Histone H2B, sperm from Marthasterias glacialis (Spiny starfish).